A 61-amino-acid polypeptide reads, in one-letter code: Large ribosomal subunit protein bL28 (61 aa).

The protein belongs to the bacterial ribosomal protein bL28 family.

This is Large ribosomal subunit protein bL28 from Lactobacillus johnsonii (strain CNCM I-12250 / La1 / NCC 533).